Here is a 474-residue protein sequence, read N- to C-terminus: Cysteine--tRNA ligase (474 aa).

Residue Cys-28 coordinates Zn(2+). A 'HIGH' region motif is present at residues 30–40 (ITVYDLCHLGH). Zn(2+)-binding residues include Cys-209, His-234, and Glu-238. Positions 269-273 (KMSKS) match the 'KMSKS' region motif. An ATP-binding site is contributed by Lys-272.

It belongs to the class-I aminoacyl-tRNA synthetase family. Monomer. It depends on Zn(2+) as a cofactor.

It localises to the cytoplasm. It catalyses the reaction tRNA(Cys) + L-cysteine + ATP = L-cysteinyl-tRNA(Cys) + AMP + diphosphate. The polypeptide is Cysteine--tRNA ligase (Blochmanniella floridana).